The primary structure comprises 204 residues: Glycerol-3-phosphate acyltransferase (204 aa).

5 helical membrane-spanning segments follow: residues 12-32, 85-105, 117-137, 142-162, and 163-183; these read LVMG…HWLA, WQVA…WLGW, MLLG…LTVL, IVSL…ILRF, and QGNS…MVVW.

It belongs to the PlsY family. Probably interacts with PlsX.

Its subcellular location is the cell inner membrane. It carries out the reaction an acyl phosphate + sn-glycerol 3-phosphate = a 1-acyl-sn-glycero-3-phosphate + phosphate. It participates in lipid metabolism; phospholipid metabolism. In terms of biological role, catalyzes the transfer of an acyl group from acyl-phosphate (acyl-PO(4)) to glycerol-3-phosphate (G3P) to form lysophosphatidic acid (LPA). This enzyme utilizes acyl-phosphate as fatty acyl donor, but not acyl-CoA or acyl-ACP. The sequence is that of Glycerol-3-phosphate acyltransferase from Prochlorococcus marinus (strain MIT 9313).